A 696-amino-acid polypeptide reads, in one-letter code: Glycine--tRNA ligase beta subunit (696 aa).

It belongs to the class-II aminoacyl-tRNA synthetase family. As to quaternary structure, tetramer of two alpha and two beta subunits.

Its subcellular location is the cytoplasm. The catalysed reaction is tRNA(Gly) + glycine + ATP = glycyl-tRNA(Gly) + AMP + diphosphate. This is Glycine--tRNA ligase beta subunit from Methylorubrum extorquens (strain CM4 / NCIMB 13688) (Methylobacterium extorquens).